We begin with the raw amino-acid sequence, 920 residues long: Dynamin-2B (920 aa).

Met1 is modified (N-acetylmethionine). In terms of domain architecture, Dynamin-type G spans 35-303 (PATSLNVVAL…IRSRMKLRLP (269 aa)). Positions 45 to 52 (GNVGAGKS) are G1 motif. 45–53 (GNVGAGKSA) serves as a coordination point for GTP. Residues 71 to 73 (ATR) form a G2 motif region. A G3 motif region spans residues 143–146 (DLPG). The G4 motif stretch occupies residues 204–207 (SKID). 204-210 (SKIDQAA) is a binding site for GTP. Residues 238–241 (ALIG) are G5 motif. 246–249 (IASA) lines the GTP pocket. Residues 507–522 (RREEELKGRSSKKGQD) show a composition bias toward basic and acidic residues. 2 disordered regions span residues 507–577 (RREE…TAGP) and 632–657 (IEEISDDEGEKSKSSKDKKSNGPDSK). Residues 523 to 545 (AEQSLLNRATSPQPDGPSSTGGS) show a composition bias toward polar residues. Composition is skewed to basic and acidic residues over residues 548 to 567 (SLRDKLMPQDKDKDKEKETP) and 641 to 652 (EKSKSSKDKKSN). Positions 579 to 703 (GEITAGYLMK…WINKLQKVIQ (125 aa)) constitute a PH domain. The 94-residue stretch at 737 to 830 (LRWMSQEVRG…QLSIHDNRAA (94 aa)) folds into the GED domain. Residues 747–761 (YVEAVLNSLAANVPK) form an important for homodimerization region. Positions 788–812 (NERIESLIQEDQNVKRRRDRYQKQS) form a coiled coil. The tract at residues 828 to 920 (RAAAASSWSD…PPQSGSSYRY (93 aa)) is disordered. The span at 833 to 849 (SSWSDNSGTESSPRTNG) shows a compositional bias: polar residues.

The protein belongs to the TRAFAC class dynamin-like GTPase superfamily. Dynamin/Fzo/YdjA family. As to quaternary structure, interacts with DRP1A at the plasma membrane and in forming clathrin-coated vesicles (CCV). Ubiquitous. Preferentially expressed in siliques.

The protein resides in the cytoplasm. It localises to the cytoskeleton. The protein localises to the cytoplasmic vesicle. It is found in the clathrin-coated vesicle. Its subcellular location is the cell membrane. The enzyme catalyses GTP + H2O = GDP + phosphate + H(+). Putative microtubule-associated force-producing protein, able to bind and hydrolyze GTP. Collaboratively with DRP1A, participates in clathrin-coated vesicle formation during endocytosis. With DRP1A and PIP5K3, required for the precise coordination of polar ARAC3/ROP6 and ARAC4/ROP2 placement and subsequent root hair positioning during planar polarity formation in root hair-forming cells. The protein is Dynamin-2B of Arabidopsis thaliana (Mouse-ear cress).